The following is a 352-amino-acid chain: Gap junction alpha-4 protein (352 aa).

The Cytoplasmic segment spans residues 2-23 (GDWEFLEKLLDQVQEHSTSIGK). The helical transmembrane segment at 24-46 (IWLMVLFIFRILILGLAGESVWG) threads the bilayer. At 47-76 (DEQSDFICNTEQPGCTNVCYDKAFPISHVR) the chain is on the extracellular side. A helical transmembrane segment spans residues 77–99 (YWVLQFLFVSTPTLFYLGHVIYL). The Cytoplasmic portion of the chain corresponds to 100 to 153 (SRREEKLKQKESELRALDDKEQVEQAIAIIEKKKMKLYIQEDGTVKIKGALMCT). Residues 154-176 (YLTSVIFKSLFEAGFLLGQWYLY) traverse the membrane as a helical segment. The Extracellular segment spans residues 177 to 208 (GFVMTPIYVCERVPCPHKVDCFVSRPMEKTIF). Residues 209-231 (IVFMLVVSLISLFLNVLELIHLV) form a helical membrane-spanning segment. Over 232 to 352 (CKSMIDTLKK…SSSASKKQYV (121 aa)) the chain is Cytoplasmic. The disordered stretch occupies residues 330 to 352 (KTHSTMEKPSTRASSSASKKQYV). Residues 340–352 (TRASSSASKKQYV) are compositionally biased toward polar residues.

It belongs to the connexin family. Alpha-type (group II) subfamily. In terms of assembly, a connexon is composed of a hexamer of connexins.

Its subcellular location is the cell membrane. It is found in the cell junction. The protein resides in the gap junction. Its function is as follows. One gap junction consists of a cluster of closely packed pairs of transmembrane channels, the connexons, through which materials of low MW diffuse from one cell to a neighboring cell. The sequence is that of Gap junction alpha-4 protein (gja4) from Xenopus tropicalis (Western clawed frog).